Consider the following 400-residue polypeptide: MVRPLNPRPLPPVVLMLLLLLPPSPLPLAAGDPLPTESRLMNSCLQARRKCQADPTCSAAYHHLDSCTSSISTPLPSEEPSVPADCLEAAQQLRNSSLIGCMCHRRMKNQVACLDIYWTVHRARSLGNYELDVSPYEDTVTSKPWKMNLSKLNMLKPDSDLCLKFAMLCTLNDKCDRLRKAYGEACSGPHCQRHVCLRQLLTFFEKAAEPHAQGLLLCPCAPNDRGCGERRRNTIAPNCALPPVAPNCLELRRLCFSDPLCRSRLVDFQTHCHPMDILGTCATEQSRCLRAYLGLIGTAMTPNFVSNVNTSVALSCTCRGSGNLQEECEMLEGFFSHNPCLTEAIAAKMRFHSQLFSQDWPHPTFAVMAHQNENPAVRPQPWVPSLFSCTLPLILLLSLW.

Residues 1–31 (MVRPLNPRPLPPVVLMLLLLLPPSPLPLAAG) form the signal peptide. An intrachain disulfide couples Cys51 to Cys57. 2 N-linked (GlcNAc...) asparagine glycosylation sites follow: Asn95 and Asn148. Intrachain disulfides connect Cys162–Cys218, Cys169–Cys175, Cys186–Cys196, Cys191–Cys239, Cys220–Cys227, Cys248–Cys316, Cys255–Cys261, Cys272–Cys288, Cys281–Cys340, and Cys318–Cys328. Asn309 is a glycosylation site (N-linked (GlcNAc...) asparagine). A lipid anchor (GPI-anchor amidated asparagine) is attached at Asn374. A propeptide spans 375 to 400 (PAVRPQPWVPSLFSCTLPLILLLSLW) (removed in mature form).

It belongs to the GDNFR family. Interacts with ARTN ligand and RET: forms a 2:2:2 ternary complex composed of ARTN ligand, GFRA3 and RET receptor. Interacts with SORL1. In terms of processing, N-glycosylated. Widely expressed in adult and fetus which exhibit a similar pattern. Essentially not expressed in the central nervous system, but highly expressed in several sensory and sympathetic ganglia of the peripheral nervous system. Moderate expression in many non-neuronal tissues, particularly those of the digestive and urogenital systems, but high expression in stomach and appendix. Several types of glandular tissues show low expression. Very low or no expression detected in the hematopoietic system.

The protein localises to the cell membrane. Its function is as follows. Receptor for artemin (ARTN), a growth factor that supports the survival of sensory and sympathetic peripheral neurons. ARTN-binding leads to autophosphorylation and activation of the RET receptor. The chain is GDNF family receptor alpha-3 (GFRA3) from Homo sapiens (Human).